A 317-amino-acid polypeptide reads, in one-letter code: DNA-directed RNA polymerase subunit alpha (317 aa).

An alpha N-terminal domain (alpha-NTD) region spans residues 1–234; it reads MKQFNKPEFG…SHFDVFTTLA (234 aa). Positions 249–317 are alpha C-terminal domain (alpha-CTD); the sequence is EEKELDKPVE…AALELTFKQN (69 aa).

The protein belongs to the RNA polymerase alpha chain family. In terms of assembly, homodimer. The RNAP catalytic core consists of 2 alpha, 1 beta, 1 beta' and 1 omega subunit. When a sigma factor is associated with the core the holoenzyme is formed, which can initiate transcription.

The catalysed reaction is RNA(n) + a ribonucleoside 5'-triphosphate = RNA(n+1) + diphosphate. Functionally, DNA-dependent RNA polymerase catalyzes the transcription of DNA into RNA using the four ribonucleoside triphosphates as substrates. This is DNA-directed RNA polymerase subunit alpha from Mesoplasma florum (strain ATCC 33453 / NBRC 100688 / NCTC 11704 / L1) (Acholeplasma florum).